A 352-amino-acid polypeptide reads, in one-letter code: Protein-glutamate methylesterase/protein-glutamine glutaminase (352 aa).

The Response regulatory domain occupies Arg-4–Glu-121. Asp-55 bears the 4-aspartylphosphate mark. Positions Ala-159–Arg-351 constitute a CheB-type methylesterase domain. Residues Ser-171, His-197, and Asp-293 contribute to the active site.

Belongs to the CheB family. In terms of processing, phosphorylated by CheA. Phosphorylation of the N-terminal regulatory domain activates the methylesterase activity.

The protein resides in the cytoplasm. It catalyses the reaction [protein]-L-glutamate 5-O-methyl ester + H2O = L-glutamyl-[protein] + methanol + H(+). It carries out the reaction L-glutaminyl-[protein] + H2O = L-glutamyl-[protein] + NH4(+). In terms of biological role, involved in chemotaxis. Part of a chemotaxis signal transduction system that modulates chemotaxis in response to various stimuli. Catalyzes the demethylation of specific methylglutamate residues introduced into the chemoreceptors (methyl-accepting chemotaxis proteins or MCP) by CheR. Also mediates the irreversible deamidation of specific glutamine residues to glutamic acid. The chain is Protein-glutamate methylesterase/protein-glutamine glutaminase from Sulfurimonas denitrificans (strain ATCC 33889 / DSM 1251) (Thiomicrospira denitrificans (strain ATCC 33889 / DSM 1251)).